A 502-amino-acid chain; its full sequence is NAD(P)H-quinone oxidoreductase chain 4, chloroplastic (502 aa).

Transmembrane regions (helical) follow at residues 4–24, 37–57, 86–106, 113–131, 136–156, 169–189, 210–230, 244–264, 274–294, 307–327, 332–352, 388–408, 418–438, and 464–484; these read FPWLTVIVVLPISAGSSIFFV, YTICICLLEILLTTYAFCYHF, GLSIGPILLTGFITTLATLAA, SRLFHFLMLAMYSGQVGSF, LLLFFLMWELELIPVYLLLSM, FILYTAGGSIFLLMGVSGMGL, GLEIIFYFGFLIAYAVKSPII, HYSTCMLLAGILLKMGAYGLV, AHSIFSPWLVIVGAIQIIYAA, IAYSSVSHMGFTLIGIGSITD, GAILQIISHGFIGAALFFLAG, LALPGMSGFVAELVVFFGIIT, IVISFVMAIGMILTPIYSLSM, and LFVSICIFLPVVGIGIYPDFV.

Belongs to the complex I subunit 4 family.

It localises to the plastid. The protein resides in the chloroplast thylakoid membrane. It carries out the reaction a plastoquinone + NADH + (n+1) H(+)(in) = a plastoquinol + NAD(+) + n H(+)(out). The enzyme catalyses a plastoquinone + NADPH + (n+1) H(+)(in) = a plastoquinol + NADP(+) + n H(+)(out). This Calycanthus floridus var. glaucus (Eastern sweetshrub) protein is NAD(P)H-quinone oxidoreductase chain 4, chloroplastic.